Consider the following 39-residue polypeptide: Photosystem II reaction center protein L (39 aa).

Residues 18–38 (SLYLGLLSVLVLGILFSSYFF) traverse the membrane as a helical segment.

The protein belongs to the PsbL family. PSII is composed of 1 copy each of membrane proteins PsbA, PsbB, PsbC, PsbD, PsbE, PsbF, PsbH, PsbI, PsbJ, PsbK, PsbL, PsbM, PsbT, PsbX, PsbY, Psb30/Ycf12, peripheral proteins PsbO, CyanoQ (PsbQ), PsbU, PsbV and a large number of cofactors. It forms dimeric complexes.

The protein localises to the cellular thylakoid membrane. Its function is as follows. One of the components of the core complex of photosystem II (PSII). PSII is a light-driven water:plastoquinone oxidoreductase that uses light energy to abstract electrons from H(2)O, generating O(2) and a proton gradient subsequently used for ATP formation. It consists of a core antenna complex that captures photons, and an electron transfer chain that converts photonic excitation into a charge separation. This subunit is found at the monomer-monomer interface and is required for correct PSII assembly and/or dimerization. The chain is Photosystem II reaction center protein L from Prochlorococcus marinus subsp. pastoris (strain CCMP1986 / NIES-2087 / MED4).